We begin with the raw amino-acid sequence, 182 residues long: ATP-dependent protease subunit HslV (182 aa).

Thr12 is an active-site residue. Na(+) is bound by residues Ala167, Cys170, and Thr173.

This sequence belongs to the peptidase T1B family. HslV subfamily. As to quaternary structure, a double ring-shaped homohexamer of HslV is capped on each side by a ring-shaped HslU homohexamer. The assembly of the HslU/HslV complex is dependent on binding of ATP.

The protein resides in the cytoplasm. It carries out the reaction ATP-dependent cleavage of peptide bonds with broad specificity.. Its activity is regulated as follows. Allosterically activated by HslU binding. Functionally, protease subunit of a proteasome-like degradation complex believed to be a general protein degrading machinery. The polypeptide is ATP-dependent protease subunit HslV (Chlorobium chlorochromatii (strain CaD3)).